We begin with the raw amino-acid sequence, 989 residues long: Phosphoenolpyruvate carboxylase (989 aa).

Active-site residues include H175 and K630.

It belongs to the PEPCase type 1 family. Requires Mg(2+) as cofactor.

The enzyme catalyses oxaloacetate + phosphate = phosphoenolpyruvate + hydrogencarbonate. Its function is as follows. Forms oxaloacetate, a four-carbon dicarboxylic acid source for the tricarboxylic acid cycle. The polypeptide is Phosphoenolpyruvate carboxylase (Prochlorococcus marinus (strain MIT 9312)).